A 53-amino-acid chain; its full sequence is Sec-independent protein translocase protein TatA (53 aa).

A helical membrane pass occupies residues 1–21 (MGMSLSHLLIVLLIIFVLFGA).

Belongs to the TatA/E family. In terms of assembly, the Tat system comprises two distinct complexes: a TatABC complex, containing multiple copies of TatA, TatB and TatC subunits, and a separate TatA complex, containing only TatA subunits. Substrates initially bind to the TatABC complex, which probably triggers association of the separate TatA complex to form the active translocon.

It localises to the cell inner membrane. In terms of biological role, part of the twin-arginine translocation (Tat) system that transports large folded proteins containing a characteristic twin-arginine motif in their signal peptide across membranes. TatA could form the protein-conducting channel of the Tat system. The chain is Sec-independent protein translocase protein TatA from Rickettsia conorii (strain ATCC VR-613 / Malish 7).